A 260-amino-acid chain; its full sequence is Coiled-coil domain-containing protein 127 (260 aa).

The stretch at alanine 76–asparagine 139 forms a coiled coil.

The polypeptide is Coiled-coil domain-containing protein 127 (Ccdc127) (Mus musculus (Mouse)).